A 429-amino-acid polypeptide reads, in one-letter code: Glutamyl-tRNA reductase (429 aa).

Substrate contacts are provided by residues 52–55 (TCNR), S110, 115–117 (EAQ), and Q121. Residue C53 is the Nucleophile of the active site. 190–195 (GAGAMI) provides a ligand contact to NADP(+).

The protein belongs to the glutamyl-tRNA reductase family. Homodimer.

It catalyses the reaction (S)-4-amino-5-oxopentanoate + tRNA(Glu) + NADP(+) = L-glutamyl-tRNA(Glu) + NADPH + H(+). It functions in the pathway porphyrin-containing compound metabolism; protoporphyrin-IX biosynthesis; 5-aminolevulinate from L-glutamyl-tRNA(Glu): step 1/2. Functionally, catalyzes the NADPH-dependent reduction of glutamyl-tRNA(Glu) to glutamate 1-semialdehyde (GSA). The sequence is that of Glutamyl-tRNA reductase from Verminephrobacter eiseniae (strain EF01-2).